Here is a 492-residue protein sequence, read N- to C-terminus: Catalase (492 aa).

Residues histidine 65 and asparagine 138 contribute to the active site. Residue tyrosine 348 participates in heme binding.

The protein belongs to the catalase family. In terms of assembly, homotetramer. The cofactor is heme.

The protein localises to the cytoplasm. Its subcellular location is the cytosol. The protein resides in the peroxisome matrix. The catalysed reaction is 2 H2O2 = O2 + 2 H2O. Catalyzes the degradation of hydrogen peroxide (H(2)O(2)) generated by peroxisomal oxidases to water and oxygen, thereby protecting cells from the toxic effects of hydrogen peroxide. This Triticum aestivum (Wheat) protein is Catalase (CATA).